A 105-amino-acid polypeptide reads, in one-letter code: Met repressor (105 aa).

It belongs to the MetJ family. Homodimer.

It is found in the cytoplasm. This regulatory protein, when combined with SAM (S-adenosylmethionine) represses the expression of the methionine regulon and of enzymes involved in SAM synthesis. The chain is Met repressor from Sodalis glossinidius (strain morsitans).